An 87-amino-acid chain; its full sequence is Defensin alpha-like protein 1 (87 aa).

Residues Met-1 to Ala-19 form the signal peptide. A propeptide spanning residues Asp-20–Asp-56 is cleaved from the precursor. Acidic residues predominate over residues Gln-23–Asp-41. A disordered region spans residues Gln-23–Ser-43.

The protein belongs to the alpha-defensin family. In terms of assembly, antiparallel homodimer; disulfide-linked. As to expression, specifically expressed in small intestine (jejunum and ileum). Probably expressed by Paneth cells at the base of intestinal crypts. Coexpressed with MMP7 in small intestine.

It is found in the secreted. Intestinal defense peptide. Has potent antibacterial activity against Gram-negative bacteria E.coli O157:H7, S.typhimurium DT104, and K.pneumoniae; and against Gram-positive bacteria S.aureus, methicillin-resistant S.aureus and L.monocytogenes. Remains active in the presence of NaCl and Mg(2+). Probably functions by disrupting bacterial membrane integrity. However, does not show cytotoxic activity towards human intestinal cells. The protein is Defensin alpha-like protein 1 of Rattus norvegicus (Rat).